Here is a 363-residue protein sequence, read N- to C-terminus: MERVYNFSAGPAVLPVPVLEKVQRELLSYNGSGMSVMELSHRSELFQNILDDAESLIRELMEIPDNYKVLFLQGGASLQFDMVPMNLANGKKAAYVNTGSWAKKAISEAKKIQGVEVEVIASSEDRNFSYIPEIPTVSSDVAYLHVTTNNTIEGTAMFDVPDSAVPVVADMSSNILSSVYDVKKFGLIYAGAQKNIGPAGLTLVIVREDLIGQVEGLPSMLDFKVQAENDSMYNTPPTFAIYVAKLVFEWIKEQGGVAGIEALNRKKAALLYDYIDQSDFFSSPVEPSARSLTNVPFVTNSAEFDKAFVKEAEANGFENLKGHRSVGGMRASLYNAFPIEGVEALIAFMEKFANARKGGEVRV.

Arginine 42 provides a ligand contact to L-glutamate. Residues 76 to 77, tryptophan 101, threonine 151, aspartate 170, and glutamine 193 each bind pyridoxal 5'-phosphate; that span reads AS. Residue lysine 194 is modified to N6-(pyridoxal phosphate)lysine. Position 234–235 (234–235) interacts with pyridoxal 5'-phosphate; it reads NT.

It belongs to the class-V pyridoxal-phosphate-dependent aminotransferase family. SerC subfamily. In terms of assembly, homodimer. It depends on pyridoxal 5'-phosphate as a cofactor.

Its subcellular location is the cytoplasm. The enzyme catalyses O-phospho-L-serine + 2-oxoglutarate = 3-phosphooxypyruvate + L-glutamate. The catalysed reaction is 4-(phosphooxy)-L-threonine + 2-oxoglutarate = (R)-3-hydroxy-2-oxo-4-phosphooxybutanoate + L-glutamate. It participates in amino-acid biosynthesis; L-serine biosynthesis; L-serine from 3-phospho-D-glycerate: step 2/3. Catalyzes the reversible conversion of 3-phosphohydroxypyruvate to phosphoserine and of 3-hydroxy-2-oxo-4-phosphonooxybutanoate to phosphohydroxythreonine. In Listeria monocytogenes serovar 1/2a (strain ATCC BAA-679 / EGD-e), this protein is Phosphoserine aminotransferase.